Consider the following 319-residue polypeptide: Ribosomal RNA small subunit methyltransferase H (319 aa).

Residues 52–54 (GGH), Asp-70, Phe-100, Asp-126, and Gln-133 each bind S-adenosyl-L-methionine. The tract at residues 289 to 319 (PKPLSPSELERQRNPRARSAKLRVAARSSQM) is disordered.

It belongs to the methyltransferase superfamily. RsmH family.

It is found in the cytoplasm. The catalysed reaction is cytidine(1402) in 16S rRNA + S-adenosyl-L-methionine = N(4)-methylcytidine(1402) in 16S rRNA + S-adenosyl-L-homocysteine + H(+). Its function is as follows. Specifically methylates the N4 position of cytidine in position 1402 (C1402) of 16S rRNA. This is Ribosomal RNA small subunit methyltransferase H from Synechococcus sp. (strain JA-2-3B'a(2-13)) (Cyanobacteria bacterium Yellowstone B-Prime).